Reading from the N-terminus, the 217-residue chain is MGIEVCVKAASGAPDVLGDCPFGQRILLTLEDKKLPYKTHLIDVSLKPDWFLAISPKGKLPLVKFDEDENWVADSDLIVGIIEEKYPEPSLVTFPPEFASVGSKIIGAFVMFLTSKDHANDGSDMALLDELEALDHHLKTHVGPFVAGDKVTVVDLSLAPKLYHLETTLGHFMDWCVPESLTNVRDYMKVLFSLESFEKTKAAKEYLIASWAPKLDV.

Positions 8 and 19 each coordinate glutathione. L-ascorbate is bound by residues K8 and D19. The region spanning 10-85 (ASGAPDVLGD…DLIVGIIEEK (76 aa)) is the GST N-terminal domain. The Nucleophile role is filled by C20. The Glutathione-binding motif lies at 20 to 25 (CPFGQR). Residues K47, S75, H164, and W211 each contribute to the glutathione site. In terms of domain architecture, GST C-terminal spans 86–217 (YPEPSLVTFP…IASWAPKLDV (132 aa)). Residue K214 participates in L-ascorbate binding.

It belongs to the GST superfamily. DHAR family. Monomer.

It is found in the cytoplasm. The protein resides in the cytosol. The enzyme catalyses RX + glutathione = an S-substituted glutathione + a halide anion + H(+). It carries out the reaction L-dehydroascorbate + 2 glutathione = glutathione disulfide + L-ascorbate. Functionally, exhibits glutathione-dependent thiol transferase and dehydroascorbate (DHA) reductase activities. The protein is Probable glutathione S-transferase DHAR4 (DHAR4) of Arabidopsis thaliana (Mouse-ear cress).